Consider the following 417-residue polypeptide: UPF0761 membrane protein Daci_4966 (417 aa).

Helical transmembrane passes span 49–69 (VLALVPFFTVALALFTAFPIF), 106–126 (QLGMAGFSILVITAVALILTI), 146–166 (VLIYWAAITLGPLVLGLSLVL), 187–207 (FIFDSIEYLALAAGMAGLYHY), 235–255 (ALGLYLASVPTYSVIYGTFAT), and 256–276 (LPILLIWIYMAWIIVLLGAVV).

Belongs to the UPF0761 family.

It localises to the cell inner membrane. This Delftia acidovorans (strain DSM 14801 / SPH-1) protein is UPF0761 membrane protein Daci_4966.